The sequence spans 128 residues: Protein ApaG (128 aa).

The region spanning 1–123 (MTSSPDITVS…FRLDIAPESG (123 aa)) is the ApaG domain.

The sequence is that of Protein ApaG from Deinococcus radiodurans (strain ATCC 13939 / DSM 20539 / JCM 16871 / CCUG 27074 / LMG 4051 / NBRC 15346 / NCIMB 9279 / VKM B-1422 / R1).